Reading from the N-terminus, the 392-residue chain is Proteasome-activating nucleotidase (392 aa).

Residues 19-53 are a coiled coil; it reads IVRLLEEKIESLTKELEKLRQDLNWYKGELEKLLA. Residues 178–183 and Y317 each bind ATP; that span reads GTGKTL. Positions 390–392 are docks into pockets in the proteasome alpha-ring to cause gate opening; the sequence is KYV.

The protein belongs to the AAA ATPase family. As to quaternary structure, homohexamer. The hexameric complex has a two-ring architecture resembling a top hat that caps the 20S proteasome core at one or both ends. Upon ATP-binding, the C-terminus of PAN interacts with the alpha-rings of the proteasome core by binding to the intersubunit pockets.

The protein resides in the cytoplasm. In terms of biological role, ATPase which is responsible for recognizing, binding, unfolding and translocation of substrate proteins into the archaeal 20S proteasome core particle. Is essential for opening the gate of the 20S proteasome via an interaction with its C-terminus, thereby allowing substrate entry and access to the site of proteolysis. Thus, the C-termini of the proteasomal ATPase function like a 'key in a lock' to induce gate opening and therefore regulate proteolysis. Unfolding activity requires energy from ATP hydrolysis, whereas ATP binding alone promotes ATPase-20S proteasome association which triggers gate opening, and supports translocation of unfolded substrates. This is Proteasome-activating nucleotidase from Sulfurisphaera tokodaii (strain DSM 16993 / JCM 10545 / NBRC 100140 / 7) (Sulfolobus tokodaii).